The chain runs to 427 residues: Enolase (427 aa).

Q162 is a binding site for (2R)-2-phosphoglycerate. E204 acts as the Proton donor in catalysis. Mg(2+) contacts are provided by D241, E284, and D311. (2R)-2-phosphoglycerate contacts are provided by K336, R365, S366, and K387. K336 functions as the Proton acceptor in the catalytic mechanism.

It belongs to the enolase family. Requires Mg(2+) as cofactor.

It is found in the cytoplasm. The protein resides in the secreted. It localises to the cell surface. It carries out the reaction (2R)-2-phosphoglycerate = phosphoenolpyruvate + H2O. Its pathway is carbohydrate degradation; glycolysis; pyruvate from D-glyceraldehyde 3-phosphate: step 4/5. In terms of biological role, catalyzes the reversible conversion of 2-phosphoglycerate (2-PG) into phosphoenolpyruvate (PEP). It is essential for the degradation of carbohydrates via glycolysis. The protein is Enolase of Corynebacterium kroppenstedtii (strain DSM 44385 / JCM 11950 / CIP 105744 / CCUG 35717).